The chain runs to 399 residues: Carbamoyl phosphate synthase small chain (399 aa).

The CPSase stretch occupies residues 1–209; it reads MEKFKLLKLG…SAINKKLHTS (209 aa). Residues S55, G261, and G263 each coordinate L-glutamine. In terms of domain architecture, Glutamine amidotransferase type-1 spans 213–399; sequence RIIVLDLGVK…VYIIYKSKSS (187 aa). Residue C289 is the Nucleophile of the active site. 5 residues coordinate L-glutamine: L290, Q293, N329, G331, and F332. Residues H372 and E374 contribute to the active site.

This sequence belongs to the CarA family. As to quaternary structure, composed of two chains; the small (or glutamine) chain promotes the hydrolysis of glutamine to ammonia, which is used by the large (or ammonia) chain to synthesize carbamoyl phosphate. Tetramer of heterodimers (alpha,beta)4.

It is found in the plastid. It localises to the chloroplast. The enzyme catalyses hydrogencarbonate + L-glutamine + 2 ATP + H2O = carbamoyl phosphate + L-glutamate + 2 ADP + phosphate + 2 H(+). The catalysed reaction is L-glutamine + H2O = L-glutamate + NH4(+). It participates in amino-acid biosynthesis; L-arginine biosynthesis; carbamoyl phosphate from bicarbonate: step 1/1. It functions in the pathway pyrimidine metabolism; UMP biosynthesis via de novo pathway; (S)-dihydroorotate from bicarbonate: step 1/3. Functionally, small subunit of the glutamine-dependent carbamoyl phosphate synthetase (CPSase). CPSase catalyzes the formation of carbamoyl phosphate from the ammonia moiety of glutamine, carbonate, and phosphate donated by ATP, constituting the first step of 2 biosynthetic pathways, one leading to arginine and/or urea and the other to pyrimidine nucleotides. The small subunit (glutamine amidotransferase) binds and cleaves glutamine to supply the large subunit with the substrate ammonia. This Cyanidium caldarium (Red alga) protein is Carbamoyl phosphate synthase small chain.